The following is a 405-amino-acid chain: Deoxyguanosinetriphosphate triphosphohydrolase-like protein (405 aa).

Residues 75 to 219 (RLTHTIEVAQ…AAIADDIAYN (145 aa)) enclose the HD domain.

It belongs to the dGTPase family. Type 2 subfamily.

This is Deoxyguanosinetriphosphate triphosphohydrolase-like protein from Rhizobium johnstonii (strain DSM 114642 / LMG 32736 / 3841) (Rhizobium leguminosarum bv. viciae).